Here is a 107-residue protein sequence, read N- to C-terminus: UPF0060 membrane protein RPB_2370 (107 aa).

4 consecutive transmembrane segments (helical) span residues 5 to 25, 31 to 51, 61 to 81, and 85 to 105; these read IIYV…WGWL, VWWL…LTLV, AAYG…VEGV, and RWDV…LWGP.

This sequence belongs to the UPF0060 family.

It localises to the cell inner membrane. The chain is UPF0060 membrane protein RPB_2370 from Rhodopseudomonas palustris (strain HaA2).